A 498-amino-acid polypeptide reads, in one-letter code: Glycerol kinase (498 aa).

Thr11 provides a ligand contact to ADP. Positions 11, 12, and 13 each coordinate ATP. Position 11 (Thr11) interacts with sn-glycerol 3-phosphate. Residue Arg15 participates in ADP binding. 4 residues coordinate sn-glycerol 3-phosphate: Arg81, Glu82, Tyr133, and Asp242. Glycerol-binding residues include Arg81, Glu82, Tyr133, Asp242, and Gln243. The ADP site is built by Thr264 and Gly307. Residues Thr264, Gly307, Gln311, and Gly408 each contribute to the ATP site. ADP is bound by residues Gly408 and Asn412.

It belongs to the FGGY kinase family.

The enzyme catalyses glycerol + ATP = sn-glycerol 3-phosphate + ADP + H(+). It participates in polyol metabolism; glycerol degradation via glycerol kinase pathway; sn-glycerol 3-phosphate from glycerol: step 1/1. Inhibited by fructose 1,6-bisphosphate (FBP). Functionally, key enzyme in the regulation of glycerol uptake and metabolism. Catalyzes the phosphorylation of glycerol to yield sn-glycerol 3-phosphate. The chain is Glycerol kinase from Ralstonia pickettii (strain 12J).